The following is a 517-amino-acid chain: GMP synthase [glutamine-hydrolyzing] (517 aa).

The 191-residue stretch at 9–199 (RILILDFGSQ…VLGVCGCERL (191 aa)) folds into the Glutamine amidotransferase type-1 domain. Catalysis depends on cysteine 86, which acts as the Nucleophile. Active-site residues include histidine 173 and glutamate 175. Residues 200–392 (WTSESIIEDA…LGLPYEMLYR (193 aa)) enclose the GMPS ATP-PPase domain. 227–233 (SGGVDSS) lines the ATP pocket.

As to quaternary structure, homodimer.

The catalysed reaction is XMP + L-glutamine + ATP + H2O = GMP + L-glutamate + AMP + diphosphate + 2 H(+). It participates in purine metabolism; GMP biosynthesis; GMP from XMP (L-Gln route): step 1/1. Its function is as follows. Catalyzes the synthesis of GMP from XMP. The chain is GMP synthase [glutamine-hydrolyzing] from Vibrio vulnificus (strain YJ016).